A 141-amino-acid chain; its full sequence is Transmembrane protein 216 (141 aa).

4 helical membrane passes run 15-35 (ILFF…LLIF), 49-69 (LVLD…RLFF), 82-102 (LGIS…YLLL), and 115-135 (SILL…LATF).

As to quaternary structure, part of the tectonic-like complex (also named B9 complex). Interacts with TMEM107.

The protein resides in the membrane. Its subcellular location is the cytoplasm. It localises to the cytoskeleton. It is found in the cilium basal body. Its function is as follows. Part of the tectonic-like complex which is required for tissue-specific ciliogenesis and may regulate ciliary membrane composition. The protein is Transmembrane protein 216 (Tmem216) of Rattus norvegicus (Rat).